The sequence spans 702 residues: Putative GMC-type oxidoreductase R135 (702 aa).

A helical membrane pass occupies residues leucine 55–leucine 75. Position 58–88 (aspartate 58–alanine 88) interacts with FAD. Residue histidine 628 is part of the active site.

This sequence belongs to the GMC oxidoreductase family. It depends on FAD as a cofactor.

It localises to the virion. It is found in the host membrane. The sequence is that of Putative GMC-type oxidoreductase R135 from Acanthamoeba polyphaga (Amoeba).